A 364-amino-acid chain; its full sequence is Geranylgeranyl pyrophosphate synthase janG (364 aa).

Isopentenyl diphosphate-binding residues include lysine 83, arginine 86, and histidine 115. The Mg(2+) site is built by aspartate 122 and aspartate 126. Arginine 131 is a binding site for dimethylallyl diphosphate. Arginine 132 is an isopentenyl diphosphate binding site. The dimethylallyl diphosphate site is built by lysine 209, threonine 210, and glutamine 243. Aspartate 246 contributes to the Mg(2+) binding site. Residues asparagine 250, lysine 260, and lysine 270 each coordinate dimethylallyl diphosphate.

This sequence belongs to the FPP/GGPP synthase family. Mg(2+) serves as cofactor.

It carries out the reaction isopentenyl diphosphate + dimethylallyl diphosphate = (2E)-geranyl diphosphate + diphosphate. It catalyses the reaction isopentenyl diphosphate + (2E)-geranyl diphosphate = (2E,6E)-farnesyl diphosphate + diphosphate. The enzyme catalyses isopentenyl diphosphate + (2E,6E)-farnesyl diphosphate = (2E,6E,10E)-geranylgeranyl diphosphate + diphosphate. Its pathway is secondary metabolite biosynthesis. Geranylgeranyl pyrophosphate synthase; part of the gene cluster that mediates the biosynthesis of the indole diterpenes janthitremanes such as shearinine K or shearinine A. The geranylgeranyl diphosphate (GGPP) synthase janG catalyzes the first step in janthitremane biosynthesis via conversion of farnesyl pyrophosphate and isopentyl pyrophosphate into geranylgeranyl pyrophosphate (GGPP). Condensation of indole-3-glycerol phosphate with GGPP by the prenyl transferase janC then forms 3-geranylgeranylindole (3-GGI). Epoxidation by the FAD-dependent monooxygenase janM leads to a epoxidized-GGI that is substrate of the terpene cyclase janB for cyclization to yield paspaline. Paspaline is subsequently converted to 13-desoxypaspaline by the cytochrome P450 monooxygenase janP, via beta-PC-M6 in a series of alpha-face oxidations. The cytochrome P450 monooxygenase janQ is proposed to carry out sequential beta-face oxidation steps at C-7 and C-13 of 13-desoxypaspaline to form paspalicine and paspalinine respectively. The indole diterpene prenyltransferase janD may then convert paspalinine into shearinine K which is substrate of janO and/or additional enzymes for oxidation and cyclization to generate shearinine A. The polypeptide is Geranylgeranyl pyrophosphate synthase janG (Penicillium janthinellum (Penicillium vitale)).